A 343-amino-acid polypeptide reads, in one-letter code: D-alanine--D-alanine ligase (343 aa).

Positions 132 to 337 (KNLFSYHKIP…YPDLIDKLIE (206 aa)) constitute an ATP-grasp domain. 165-220 (DRFLGWPCFVKPANMGSSIGVSKVHSPGEVKKALEKGFYYDRKLIFEEFVEGREIE) contributes to the ATP binding site. The Mg(2+) site is built by Asp-291, Glu-304, and Asn-306.

The protein belongs to the D-alanine--D-alanine ligase family. Mg(2+) serves as cofactor. Requires Mn(2+) as cofactor.

The protein resides in the cytoplasm. It catalyses the reaction 2 D-alanine + ATP = D-alanyl-D-alanine + ADP + phosphate + H(+). It functions in the pathway cell wall biogenesis; peptidoglycan biosynthesis. Cell wall formation. The chain is D-alanine--D-alanine ligase from Halothermothrix orenii (strain H 168 / OCM 544 / DSM 9562).